The chain runs to 185 residues: Prorelaxin 1 (185 aa).

The N-terminal stretch at 1-22 (MSSRFLLQLLGFWLLLSQPCRT) is a signal peptide. Disulfide bonds link Cys36–Cys171, Cys48–Cys185, and Cys170–Cys175. The propeptide at 58–156 (SQEEPALLAR…LKYLQSDTHS (99 aa)) is connecting peptide. The tract at residues 135–161 (RLGEAEDGSPPGLKYLQSDTHSRKKRE) is disordered.

It belongs to the insulin family. In terms of assembly, heterodimer of a B chain and an A chain linked by two disulfide bonds.

The protein localises to the secreted. Its function is as follows. Relaxin is an ovarian hormone that acts with estrogen to produce dilatation of the birth canal in many mammals. The chain is Prorelaxin 1 (Rln1) from Mus musculus (Mouse).